Consider the following 113-residue polypeptide: UPF0482 protein CKO_01577 (113 aa).

The signal sequence occupies residues 1 to 28 (MNNTLSKRLCLTAMLALGAVVYTTSAFA). The interval 44 to 67 (RQHAAMEKEQWNDTRSLRQKVNTR) is disordered. A compositionally biased stretch (basic and acidic residues) spans 47-59 (AAMEKEQWNDTRS).

Belongs to the UPF0482 family.

This Citrobacter koseri (strain ATCC BAA-895 / CDC 4225-83 / SGSC4696) protein is UPF0482 protein CKO_01577.